The chain runs to 392 residues: Nucleosome assembly protein 1-like 1-A (392 aa).

Residues 1–37 (MANIDNKGQTELDQQDMEDVEDVEEEETGEDANSKAR) are disordered. Over residues 13–30 (DQQDMEDVEDVEEEETGE) the composition is skewed to acidic residues. Residues 126–150 (YEPTEEECEWKVEEEDISGDLKEKA) carry the NAP1L motif motif. Positions 273 to 279 (IKKKQKH) match the Nuclear localization signal motif. The segment covering 346–377 (AIEDDDDDYDEEGEEADDEEGEEEADEDNDPD) has biased composition (acidic residues). The tract at residues 346–392 (AIEDDDDDYDEEGEEADDEEGEEEADEDNDPDYEPKKGQNPAECKQQ) is disordered.

This sequence belongs to the nucleosome assembly protein (NAP) family. Forms homomultimers. Interacts with histone B4. Interacts with the B-type cyclins ccnb1 and ccnb2. In terms of processing, phosphorylated by cyclin B-cdc2 kinase complexes. Initially expressed throughout the embryo with expression higher at the animal pole. Becomes localized to presumptive ectoderm by gastrula stages. By stage 18 (neurula), expressed in the neural plate and posterior to the cement gland. In late neurula/early tailbud stages, expressed in the neural crest, neural tube, eyes, tailbud and ventral blood islands. Adult expression is predominantly in ovaries.

It localises to the cytoplasm. Its subcellular location is the nucleus. Its function is as follows. Acts as a chaperone for the linker histone to facilitate deposition of histone B4 onto linker DNA. Required for both remodeling of sperm chromatin into nucleosomes, and linker histone binding to nucleosome core dimers. Plays a role in tissue-specific gene regulation. Required for primitive hemopoiesis, acting upstream of tal1/scl. The protein is Nucleosome assembly protein 1-like 1-A (nap1l1-a) of Xenopus laevis (African clawed frog).